The following is a 54-amino-acid chain: Ribulose bisphosphate carboxylase large chain (54 aa).

Positions 1–2 (MS) are excised as a propeptide. P3 is subject to N-acetylproline. K14 bears the N6,N6,N6-trimethyllysine mark.

This sequence belongs to the RuBisCO large chain family. Type I subfamily. As to quaternary structure, heterohexadecamer of 8 large chains and 8 small chains.

The protein localises to the plastid. It localises to the chloroplast. The catalysed reaction is 2 (2R)-3-phosphoglycerate + 2 H(+) = D-ribulose 1,5-bisphosphate + CO2 + H2O. It carries out the reaction D-ribulose 1,5-bisphosphate + O2 = 2-phosphoglycolate + (2R)-3-phosphoglycerate + 2 H(+). In terms of biological role, ruBisCO catalyzes two reactions: the carboxylation of D-ribulose 1,5-bisphosphate, the primary event in carbon dioxide fixation, as well as the oxidative fragmentation of the pentose substrate in the photorespiration process. Both reactions occur simultaneously and in competition at the same active site. This chain is Ribulose bisphosphate carboxylase large chain (rbcL), found in Ilex aquifolium (English holly).